A 151-amino-acid polypeptide reads, in one-letter code: Small ribosomal subunit protein uS15z (151 aa).

The protein belongs to the universal ribosomal protein uS15 family.

The chain is Small ribosomal subunit protein uS15z from Oryza sativa subsp. japonica (Rice).